We begin with the raw amino-acid sequence, 139 residues long: Nucleoside diphosphate kinase (139 aa).

ATP-binding residues include K9, F57, R85, T91, R102, and N112. The active-site Pros-phosphohistidine intermediate is H115.

Belongs to the NDK family. As to quaternary structure, homotetramer. Mg(2+) serves as cofactor.

The protein resides in the cytoplasm. It catalyses the reaction a 2'-deoxyribonucleoside 5'-diphosphate + ATP = a 2'-deoxyribonucleoside 5'-triphosphate + ADP. The catalysed reaction is a ribonucleoside 5'-diphosphate + ATP = a ribonucleoside 5'-triphosphate + ADP. In terms of biological role, major role in the synthesis of nucleoside triphosphates other than ATP. The ATP gamma phosphate is transferred to the NDP beta phosphate via a ping-pong mechanism, using a phosphorylated active-site intermediate. The polypeptide is Nucleoside diphosphate kinase (Desulfosudis oleivorans (strain DSM 6200 / JCM 39069 / Hxd3) (Desulfococcus oleovorans)).